A 196-amino-acid chain; its full sequence is RNA pyrophosphohydrolase (196 aa).

Residues 6 to 149 (GYRPNVGIVI…KRDVYRKVMK (144 aa)) enclose the Nudix hydrolase domain. Positions 38–59 (GGINDNESAEQAMYRELHEEVG) match the Nudix box motif.

Belongs to the Nudix hydrolase family. RppH subfamily. The cofactor is a divalent metal cation.

Functionally, accelerates the degradation of transcripts by removing pyrophosphate from the 5'-end of triphosphorylated RNA, leading to a more labile monophosphorylated state that can stimulate subsequent ribonuclease cleavage. The chain is RNA pyrophosphohydrolase from Haemophilus influenzae (strain PittEE).